The chain runs to 83 residues: uncharacterized protein (83 aa).

This sequence belongs to the chlamydial CPn_0710/CT_666/TC_0037 family.

This is an uncharacterized protein from Chlamydia trachomatis serovar D (strain ATCC VR-885 / DSM 19411 / UW-3/Cx).